Here is an 85-residue protein sequence, read N- to C-terminus: Elicitor peptide 7 (85 aa).

Positions 1-62 (MEGEGRREDG…TEVVNIPRSV (62 aa)) are excised as a propeptide. Positions 66 to 85 (NVAARKGKQQTSSGKGGGTN) are disordered.

This sequence belongs to the brassicaceae elicitor peptide family.

Its function is as follows. Elicitor of plant defense. In Arabidopsis thaliana (Mouse-ear cress), this protein is Elicitor peptide 7 (PEP7).